The sequence spans 144 residues: Transcriptional regulator SlyA (144 aa).

In terms of domain architecture, HTH marR-type spans 2–135 (ESPLGSDLAR…LNKIISKLEK (134 aa)). Positions 49 to 72 (QIQLAKAIGIEQPSLVRTLDQLEE) form a DNA-binding region, H-T-H motif.

It belongs to the SlyA family. Homodimer.

Its function is as follows. Transcription regulator that can specifically activate or repress expression of target genes. The chain is Transcriptional regulator SlyA from Blochmanniella pennsylvanica (strain BPEN).